The following is a 216-amino-acid chain: Imidazole glycerol phosphate synthase subunit HisH 1 (216 aa).

In terms of domain architecture, Glutamine amidotransferase type-1 spans 4-216; sequence CVLIVDAGLG…LQNFIALNPC (213 aa). C84 (nucleophile) is an active-site residue. Catalysis depends on residues H195 and E197.

As to quaternary structure, heterodimer of HisH and HisF.

Its subcellular location is the cytoplasm. The catalysed reaction is 5-[(5-phospho-1-deoxy-D-ribulos-1-ylimino)methylamino]-1-(5-phospho-beta-D-ribosyl)imidazole-4-carboxamide + L-glutamine = D-erythro-1-(imidazol-4-yl)glycerol 3-phosphate + 5-amino-1-(5-phospho-beta-D-ribosyl)imidazole-4-carboxamide + L-glutamate + H(+). It catalyses the reaction L-glutamine + H2O = L-glutamate + NH4(+). It functions in the pathway amino-acid biosynthesis; L-histidine biosynthesis; L-histidine from 5-phospho-alpha-D-ribose 1-diphosphate: step 5/9. IGPS catalyzes the conversion of PRFAR and glutamine to IGP, AICAR and glutamate. The HisH subunit provides the glutamine amidotransferase activity that produces the ammonia necessary to HisF for the synthesis of IGP and AICAR. The sequence is that of Imidazole glycerol phosphate synthase subunit HisH 1 (hisH1) from Prochlorococcus marinus (strain MIT 9313).